A 392-amino-acid chain; its full sequence is GTPase Obg (392 aa).

Residues 1–159 enclose the Obg domain; that stretch reads MKFVDEATIL…RDLQLELMLL (159 aa). Residues 127 to 148 form a disordered region; the sequence is NTRFKSSVNRTPRQKTMGTPGD. Residues 129–143 show a composition bias toward polar residues; it reads RFKSSVNRTPRQKTM. An OBG-type G domain is found at 160 to 333; the sequence is ADVGMLGMPN…LCWDVMTFII (174 aa). GTP-binding positions include 166–173, 191–195, 213–216, 283–286, and 314–316; these read GMPNAGKS, FTTLV, DIPG, NKID, and SAA. Ser173 and Thr193 together coordinate Mg(2+). The span at 362 to 386 shows a compositional bias: acidic residues; sequence EEAEAEAEDDEDWDDDWDEDDEEGV. Positions 362–392 are disordered; sequence EEAEAEAEDDEDWDDDWDEDDEEGVEFIYKR.

Belongs to the TRAFAC class OBG-HflX-like GTPase superfamily. OBG GTPase family. Monomer. The cofactor is Mg(2+).

The protein localises to the cytoplasm. An essential GTPase which binds GTP, GDP and possibly (p)ppGpp with moderate affinity, with high nucleotide exchange rates and a fairly low GTP hydrolysis rate. Plays a role in control of the cell cycle, stress response, ribosome biogenesis and in those bacteria that undergo differentiation, in morphogenesis control. The polypeptide is GTPase Obg (Klebsiella pneumoniae subsp. pneumoniae (strain ATCC 700721 / MGH 78578)).